The sequence spans 357 residues: uncharacterized protein (357 aa).

Transmembrane regions (helical) follow at residues 21-41 (FIKIIEFWFYLIQILTVLFSW), 86-106 (FFCLFTDTLYFMMLIITCTLF), and 135-155 (GGFVEFGSFTVLLLLKWPVIF). Disordered stretches follow at residues 184–229 (DKNK…AMSD) and 283–357 (KAGS…NKRN). Positions 195 to 223 (TTNTTNFSGNGSSSSTTNATSSSSSQANN) are enriched in low complexity. Composition is skewed to basic and acidic residues over residues 305–314 (KIEEYDNQKQ) and 322–337 (KETNKQQTQKDDEKET). Residues 305–337 (KIEEYDNQKQEEEENEEKETNKQQTQKDDEKET) are a coiled coil. Residues 346-357 (KKSKKGKKNKRN) are compositionally biased toward basic residues.

The protein resides in the membrane. This is an uncharacterized protein from Dictyostelium discoideum (Social amoeba).